We begin with the raw amino-acid sequence, 129 residues long: Glycine cleavage system H protein (129 aa).

Residues 24–106 (IAVIGISAYA…YEQGWLLKVQ (83 aa)) enclose the Lipoyl-binding domain. K65 carries the post-translational modification N6-lipoyllysine.

Belongs to the GcvH family. In terms of assembly, the glycine cleavage system is composed of four proteins: P, T, L and H. Requires (R)-lipoate as cofactor.

In terms of biological role, the glycine cleavage system catalyzes the degradation of glycine. The H protein shuttles the methylamine group of glycine from the P protein to the T protein. This is Glycine cleavage system H protein from Synechococcus elongatus (strain ATCC 33912 / PCC 7942 / FACHB-805) (Anacystis nidulans R2).